An 87-amino-acid chain; its full sequence is Omega-theraphotoxin-Gr1a (87 aa).

The signal sequence occupies residues 1-24 (MKAQIFVVVLGLAALSVLCYGSEA). The propeptide occupies 25 to 49 (DESALHEEIFQLLAASDEVPKPQER). Cystine bridges form between C51-C65, C58-C70, and C64-C79. The residue at position 85 (V85) is a Valine amide.

Expressed by the venom gland.

The protein resides in the secreted. Functionally, inhibits P/Q- (Cav2.1/CACNA1A) and N-type (Cav2.2/CACNA1B) voltage-gated calcium channel by modifying voltage-dependent gating. It selectively and reversibly blocks the calcium channels coupled to glutamate release. Also inhibits potassium channels (Kv2.1/KCNB1) with lower affinity. Has also been shown to weakly inhibit Kv11.1/KCNH2/ERG1, Kv1.2/KCNA2, Kv1.3/KCNA3, Nav1.5/SCN5A, Nav1.7/SCN9A and TRPV1. The sequence is that of Omega-theraphotoxin-Gr1a from Grammostola rosea (Chilean rose tarantula).